The primary structure comprises 212 residues: Thymidylate kinase (212 aa).

10–17 (GIDGCGKT) is a binding site for ATP.

Belongs to the thymidylate kinase family.

The catalysed reaction is dTMP + ATP = dTDP + ADP. Phosphorylation of dTMP to form dTDP in both de novo and salvage pathways of dTTP synthesis. The sequence is that of Thymidylate kinase from Prochlorococcus marinus (strain MIT 9312).